Consider the following 382-residue polypeptide: Galactokinase (382 aa).

Position 34–37 (34–37) interacts with substrate; it reads EHTD. An ATP-binding site is contributed by 124-130; sequence GAGLSSS. Mg(2+) contacts are provided by Ser-130 and Glu-162. Asp-174 serves as the catalytic Proton acceptor. Substrate is bound at residue Tyr-223.

It belongs to the GHMP kinase family. GalK subfamily.

It localises to the cytoplasm. It catalyses the reaction alpha-D-galactose + ATP = alpha-D-galactose 1-phosphate + ADP + H(+). It participates in carbohydrate metabolism; galactose metabolism. Catalyzes the transfer of the gamma-phosphate of ATP to D-galactose to form alpha-D-galactose-1-phosphate (Gal-1-P). The sequence is that of Galactokinase from Shigella flexneri serotype 5b (strain 8401).